Reading from the N-terminus, the 401-residue chain is CCA-adding enzyme (401 aa).

2 residues coordinate ATP: glycine 32 and arginine 35. Residues glycine 32 and arginine 35 each coordinate CTP. Mg(2+)-binding residues include aspartate 45 and aspartate 47. 5 residues coordinate ATP: arginine 116, aspartate 159, arginine 162, arginine 165, and arginine 168. The CTP site is built by arginine 116, aspartate 159, arginine 162, arginine 165, and arginine 168.

Belongs to the tRNA nucleotidyltransferase/poly(A) polymerase family. Bacterial CCA-adding enzyme type 3 subfamily. In terms of assembly, homodimer. Requires Mg(2+) as cofactor.

The catalysed reaction is a tRNA precursor + 2 CTP + ATP = a tRNA with a 3' CCA end + 3 diphosphate. The enzyme catalyses a tRNA with a 3' CCA end + 2 CTP + ATP = a tRNA with a 3' CCACCA end + 3 diphosphate. Its function is as follows. Catalyzes the addition and repair of the essential 3'-terminal CCA sequence in tRNAs without using a nucleic acid template. Adds these three nucleotides in the order of C, C, and A to the tRNA nucleotide-73, using CTP and ATP as substrates and producing inorganic pyrophosphate. tRNA 3'-terminal CCA addition is required both for tRNA processing and repair. Also involved in tRNA surveillance by mediating tandem CCA addition to generate a CCACCA at the 3' terminus of unstable tRNAs. While stable tRNAs receive only 3'-terminal CCA, unstable tRNAs are marked with CCACCA and rapidly degraded. The sequence is that of CCA-adding enzyme from Leuconostoc mesenteroides subsp. mesenteroides (strain ATCC 8293 / DSM 20343 / BCRC 11652 / CCM 1803 / JCM 6124 / NCDO 523 / NBRC 100496 / NCIMB 8023 / NCTC 12954 / NRRL B-1118 / 37Y).